Consider the following 1002-residue polypeptide: Probable transport protein MmpL10 (1002 aa).

The next 12 membrane-spanning stretches (helical) occupy residues 1-21, 177-197, 199-219, 228-248, 268-288, 306-326, 358-378, 806-826, 835-855, 862-882, 901-921, and 923-943; these read MVGC…SLAE, IAVM…TMLL, LVTI…VSLV, AIVL…VFLI, AMMS…ITFL, AIGI…ILVL, YLGA…LAHF, IVAV…RAIV, VVIS…VFLG, VPGL…MLLA, VRCT…SMSG, and LFSS…GILI.

The protein belongs to the resistance-nodulation-cell division (RND) (TC 2.A.6) family. MmpL subfamily.

The protein resides in the cell membrane. In Mycobacterium bovis (strain ATCC BAA-935 / AF2122/97), this protein is Probable transport protein MmpL10 (mmpL10).